The chain runs to 274 residues: MPGDKVTARRILKMKGSRPIVAVTAYDYPTAWIADEAGVDVILVGDSLGMVVLGYPSTLQVTLDDMVRHTAAVARAAKRPLIVADMPFGSYEPSSSAAVESAVALARVGAEAVKLEGGSEYADRVKAIVDAGIPVMGHLGLTPQRAMRIGGYRPRARGRDEARRLLLDAESLVEAGVFSIVLEFVSEEAAEMVTRRVPVPTICIGSGRRCDGQIIVFHDIVGLSRHTPPFAKKYVDARRIMVEAVTRYAEDVRNGRFPGEEHVVHAKEPLEDIS.

Residues Asp46 and Asp85 each contribute to the Mg(2+) site. 3-methyl-2-oxobutanoate-binding positions include 46-47, Asp85, and Lys114; that span reads DS. Mg(2+) is bound at residue Glu116. Residue Glu183 is the Proton acceptor of the active site.

The protein belongs to the PanB family. Homodecamer; pentamer of dimers. Mg(2+) serves as cofactor.

The protein resides in the cytoplasm. The enzyme catalyses 3-methyl-2-oxobutanoate + (6R)-5,10-methylene-5,6,7,8-tetrahydrofolate + H2O = 2-dehydropantoate + (6S)-5,6,7,8-tetrahydrofolate. Its pathway is cofactor biosynthesis; coenzyme A biosynthesis. Its function is as follows. Catalyzes the reversible reaction in which hydroxymethyl group from 5,10-methylenetetrahydrofolate is transferred onto alpha-ketoisovalerate to form ketopantoate. This chain is 3-methyl-2-oxobutanoate hydroxymethyltransferase, found in Aeropyrum pernix (strain ATCC 700893 / DSM 11879 / JCM 9820 / NBRC 100138 / K1).